We begin with the raw amino-acid sequence, 502 residues long: Mannitol 2-dehydrogenase (502 aa).

35–46 is a binding site for NAD(+); sequence IVHVGVGGFHRA.

The protein belongs to the mannitol dehydrogenase family. In terms of assembly, monomer.

It carries out the reaction D-mannitol + NAD(+) = D-fructose + NADH + H(+). Catalyzes the NAD(H)-dependent interconversion of D-fructose and D-mannitol in the mannitol metabolic pathway. The chain is Mannitol 2-dehydrogenase from Pyricularia oryzae (strain 70-15 / ATCC MYA-4617 / FGSC 8958) (Rice blast fungus).